We begin with the raw amino-acid sequence, 456 residues long: Gamma-aminobutyric acid receptor subunit alpha-1 (456 aa).

Positions 1–27 (MRKSPGLSDCLWAWILLLSTLTGRSYG) are cleaved as a signal peptide. Residues 28 to 253 (QPSLQDELKD…FHLKRKIGYF (226 aa)) are Extracellular-facing. N-linked (GlcNAc...) asparagine glycosylation is present at asparagine 38. Residue arginine 94 coordinates 4-aminobutanoate. N-linked (GlcNAc...) asparagine glycosylation is present at asparagine 138. 4-aminobutanoate is bound at residue threonine 157. A disulfide bridge connects residues cysteine 166 and cysteine 180. A helical transmembrane segment spans residues 254–274 (VIQTYLPCIMTVILSQVSFWL). The Cytoplasmic portion of the chain corresponds to 275–279 (NRESV). The chain crosses the membrane as a helical span at residues 280-301 (PARTVFGVTTVLTMTTLSISAR). Over 302 to 311 (NSLPKVAYAT) the chain is Extracellular. A helical membrane pass occupies residues 312 to 333 (AMDWFIAVCYAFVFSALIEFAT). Residues 334 to 421 (VNYFTKRGYA…TFNSVSKIDR (88 aa)) lie on the Cytoplasmic side of the membrane. A helical membrane pass occupies residues 422–441 (LSRIAFPLLFGIFNLIYWAT). Topologically, residues 442-456 (YLNREPQLKAPTPHQ) are extracellular.

It belongs to the ligand-gated ion channel (TC 1.A.9) family. Gamma-aminobutyric acid receptor (TC 1.A.9.5) subfamily. GABRA1 sub-subfamily. As to quaternary structure, heteropentamer, formed by a combination of alpha (GABRA1-6), beta (GABRB1-3), gamma (GABRG1-3), delta (GABRD), epsilon (GABRE), rho (GABRR1-3), pi (GABRP) and theta (GABRQ) subunits, each subunit exhibiting distinct physiological and pharmacological properties. Interacts with UBQLN1. Interacts with TRAK1. Interacts with KIF21B. Identified in a complex of 720 kDa composed of LHFPL4, NLGN2, GABRA1, GABRB2, GABRG2 and GABRB3. Interacts with LHFPL4. Interacts with NLGN2. Interacts with SHISA7; interaction leads to the regulation of GABA(A) receptor trafficking, channel deactivation kinetics and pharmacology.

It localises to the postsynaptic cell membrane. The protein localises to the cell membrane. Its subcellular location is the cytoplasmic vesicle membrane. It carries out the reaction chloride(in) = chloride(out). Its activity is regulated as follows. Allosterically activated by benzodiazepines, the neuroanesthetic alphaxalone and pentobarbital. Inhibited by the antagonist bicuculline. Potentiated by histamine. Alpha subunit of the heteropentameric ligand-gated chloride channel gated by gamma-aminobutyric acid (GABA), a major inhibitory neurotransmitter in the brain. GABA-gated chloride channels, also named GABA(A) receptors (GABAAR), consist of five subunits arranged around a central pore and contain GABA active binding site(s) located at the alpha and beta subunit interface(s). When activated by GABA, GABAARs selectively allow the flow of chloride anions across the cell membrane down their electrochemical gradient. Alpha-1/GABRA1-containing GABAARs are largely synaptic. Chloride influx into the postsynaptic neuron following GABAAR opening decreases the neuron ability to generate a new action potential, thereby reducing nerve transmission. GABAARs containing alpha-1 and beta-2 or -3 subunits exhibit synaptogenic activity; the gamma-2 subunit being necessary but not sufficient to induce rapid synaptic contacts formation. GABAARs function also as histamine receptor where histamine binds at the interface of two neighboring beta subunits and potentiates GABA response. GABAARs containing alpha, beta and epsilon subunits also permit spontaneous chloride channel activity while preserving the structural information required for GABA-gated openings. Alpha-1-mediated plasticity in the orbitofrontal cortex regulates context-dependent action selection. Together with rho subunits, may also control neuronal and glial GABAergic transmission in the cerebellum. The chain is Gamma-aminobutyric acid receptor subunit alpha-1 (GABRA1) from Pongo abelii (Sumatran orangutan).